Reading from the N-terminus, the 491-residue chain is Putative pentatricopeptide repeat-containing protein At1g02420 (491 aa).

PPR repeat units lie at residues 179–209 (DTAC…LKHQ), 210–244 (FQPD…GLKP), 245–279 (DVVT…EETP), 280–314 (DVIT…GCYP), 315–349 (DVAA…GLSP), 350–384 (NATT…ECLP), 385–419 (NTQS…GFGS), and 420–454 (YSLV…GHRP).

It belongs to the PPR family. P subfamily.

In Arabidopsis thaliana (Mouse-ear cress), this protein is Putative pentatricopeptide repeat-containing protein At1g02420.